Here is a 378-residue protein sequence, read N- to C-terminus: Erythronate-4-phosphate dehydrogenase (378 aa).

Substrate is bound by residues Ser-45 and Thr-66. NAD(+) is bound by residues Asp-146 and Thr-175. Arg-208 is a catalytic residue. Asp-232 lines the NAD(+) pocket. The active site involves Glu-237. Residue His-254 is the Proton donor of the active site. Gly-257 is a binding site for NAD(+). Position 258 (Tyr-258) interacts with substrate.

This sequence belongs to the D-isomer specific 2-hydroxyacid dehydrogenase family. PdxB subfamily. As to quaternary structure, homodimer.

It is found in the cytoplasm. The enzyme catalyses 4-phospho-D-erythronate + NAD(+) = (R)-3-hydroxy-2-oxo-4-phosphooxybutanoate + NADH + H(+). It functions in the pathway cofactor biosynthesis; pyridoxine 5'-phosphate biosynthesis; pyridoxine 5'-phosphate from D-erythrose 4-phosphate: step 2/5. In terms of biological role, catalyzes the oxidation of erythronate-4-phosphate to 3-hydroxy-2-oxo-4-phosphonooxybutanoate. This Escherichia coli O81 (strain ED1a) protein is Erythronate-4-phosphate dehydrogenase.